Reading from the N-terminus, the 98-residue chain is HssA/B-like protein 36 (98 aa).

Residues 1–29 are disordered; it reads MTLFSSISSISNPMTSSKSSISSFGSGTS.

The protein belongs to the hssA/B family.

The chain is HssA/B-like protein 36 (hssl36) from Dictyostelium discoideum (Social amoeba).